Consider the following 166-residue polypeptide: Small ribosomal subunit protein uS3m (166 aa).

A mitochondrion-targeting transit peptide spans 1–25 (MLRSLQHVESHINQCRRISTTSTLL).

It belongs to the universal ribosomal protein uS3 family. As to quaternary structure, component of the mitochondrial ribosome small subunit (28S) which comprises a 12S rRNA and about 30 distinct proteins.

It is found in the mitochondrion. This chain is Small ribosomal subunit protein uS3m (mrps-24), found in Caenorhabditis briggsae.